A 131-amino-acid chain; its full sequence is Ribosome-binding factor A (131 aa).

Belongs to the RbfA family. As to quaternary structure, monomer. Binds 30S ribosomal subunits, but not 50S ribosomal subunits or 70S ribosomes.

It localises to the cytoplasm. Functionally, one of several proteins that assist in the late maturation steps of the functional core of the 30S ribosomal subunit. Associates with free 30S ribosomal subunits (but not with 30S subunits that are part of 70S ribosomes or polysomes). Required for efficient processing of 16S rRNA. May interact with the 5'-terminal helix region of 16S rRNA. This is Ribosome-binding factor A from Protochlamydia amoebophila (strain UWE25).